We begin with the raw amino-acid sequence, 2551 residues long: MVFSYACMVLQRIVVPAVLVLAALMRPVGISFVYLLMFFVSPFVPLATRRNFKGSVTAFFIILLTLSTLVLLGHITLQILAVSLTLPIYNCSFSERLLRHIGFVSFIDLQPFAIIEWLVPEVLVFATSLGSYLTVKRVASQPVGAEQLENGEVVDGQAENAQTSSQPSAADANGGDVQQATVTTPLQQQQQQLRKRVSMISQHIHFEGLVKISPLFCLATLFFAAVLRPSVPGGFYFLIFLLSGTYWATCQTLQRGFALLLRCVMVVLVLHSLSIVSYQTPWMQSHLNHTTLTARLIGLEPLIESYCSPDIRVFLYNNKLSLDSYLNPFALFFAYFALALTTKHLIKPRLVRQSTRKARTPQPLESGSSVAPSVTQRGNDMQLESMEQRSEQENTTTSILDQISYGFVSVGGFIYQNSYIFTNILMMAWSIVYHSWLTFVLLLSANVLWMIPNQRKAMMRSSPFIVLYAEALLIAQYIYGMDLNNEELPTSVPTAGINLQQIGFERPIENQMRPCVPLIVKTAFVLMFWVTSRQFFKEKRDRRRDSTLADFIAPLQITVGSAGSSYLINDGKKTSKFLKKAGDVIKNLLVRLWIWLLVLVIFLCAITGENMTGFRICYMALFLFFLLVFQSSSKAWVKIMYGFWLFLIFYAMSILILIYTYQFDKFDTYWSDYLNVSATLQKDIGLKRYQTKDLFLHLVSPTIIVILTVIQVHYFHKRFIASLQQQPLAGGSAQQKPTETTALEPAPSKRRGSAGSLRKSQGPSAEAAPGATTDFETSVRDLVRISFRKIKNKSEYIFKNFKDVFWRFLELHIMKAVYIAAFVCSVSEVCVLHIIFVGFCVLGATSRKAVQVVISRLISFIVTVIVLSKMIYQIEYLSHSQHNVVCSDNRTANNAEWIGLTKADKVTGGLMSLLRTYIIYMVIVTMHAVISLRQLQMRVKIGALNAPPTKLLFPNIIRADAEKDLVGLVKYLLNFGFYKFGIEISLIALVSTITYRQDIVAVVYALWLVVLLLLRRSQCAKIWGVFQAFFAISILTQYIVLVGLPPSSCLVFPWDEGPFGEGIQRWAMLPGALHFNHVPKLIFDFIVLVILNRQKSIFCIEQRYASNDDYPGGSNRSVIADIAQLGRVPFDNPTHDFCSYIRNYSDILKNGVLCGFYWFTLAVVFLAGTNIADLLALGYLIGAFIFLWQGSDFYLRPIHTIIFRWKWLLAFNVANILIKTSFQMAGCLFMTQLTKDCCWLVHMLGITCTSNVLTEQIMLPEEAELALKPGECPKITHQVVLLWDTICFAFIIFQLRIFKSHYFCHIITDTKANNILASRGADIIESLRHKQIAHRHDHEKQVLHKIKRKMERIRATQQKMLRPLDKQTHFDEHGYPLPAPTVRRRKEIKLHPHATRAGDYYMFEEMDDKFELDLIHDEIDFLEEENITESEMKMQRRKTLYDKSKDAPTGEFPSTSKGISKERDAATASSSASPAPTRDVGDLPVIPPPSTGLGREQTSKETSDSKSKMEVDSGEVTAKDSDEDFDTNPIIRLLEGFLVTLTIRLNRFSRNYRFVNRILAGEKKTLKESSSLNRLGLSSAAAMFHFLKSNLESDESEPPASSSTPRRVVIAPPNATEHSDPTSTTLNTNTTTTPLSPPEPLQPLQPLQPNTTSTPQQQHQHIRAAEEIIELPVDTVDGVAHRKQSINSSPPAKGAGEFNLEEENFAQRDHHIIVEVLISSWYALLANTDLICYIVVFINQVVNASLISLPLPIMVFLWGTLSLPRPTKTFWVTLIAYTQAIVLIKCIFQFKLIWSNYHQLPNQPLTPAKIFGVENKAHYAIYDLILLLVLFLHRYLLKSQGLWKSGYKDTDNQFTKPTASIDERDDSDNLSQPDSRQLNDDAAQKLSLQVSQASLPGSPEFSKTGINQLERTKYTSSLYKFFFSLVHKSRLATDVYALMFLCDFVNFFVLLFGFTAFGTQQTESDEGVQTYLAENKVPIPFLIMLLVQFLLIVIDRALYLRKALVNKIIFHFFSVIGIHIWMFFVVPAVTERTFNSLAPPIIFYVIKCFYMLLSSYQIKSGYPKRILGNFFTKGFSMVNMIAFKVYMQIPFLYELRTILDWVCIDSTMTIFDWLKMEDIFSNIYLIRCTRQSETDFPAMRAQKKASLSKLIMGGTIVLLIVICIWGPLCLFALGNAVGTSNVPFHVSLSIRIGPYDPIYTTNNYDSIFEINPEMYSQMTNAYIKEKQALTFIAGYDATDVAAVRLAGNSPSLWNIAPPDRQRLLNDLRNNHTLKARFSYSLTRKAPAKGLKENVGDEHAISLDESFEGRAALIHMLSETHDVEPIYSNGTTNGTTPEVEEVVVIPGMIPKFIKVLNSGDAAVVSVLSPKHYDYRPLVIKMHRDNETNGLWWEIRDYCNDTFYNETLSKFAYSNCTSGIVMYTFNDKKFPSTFSFLTAGGIIGLYTTFVLLASRFMKSFIGGQNRKIMFEDLPYVDRVLQLCLDIYLVREALEFALEEDLFAKLLFLYRSPETLIKWTRPKEEYVDDDGDTDSIPSRMSVRRPEQLQPQQPQ.

Transmembrane regions (helical) follow at residues 5–25 (YACM…AALM), 27–47 (PVGI…VPLA), 56–76 (VTAF…GHIT), 106–126 (FIDL…LVFA), 204–226 (IHFE…FAAV), 231–250 (VPGG…WATC), 256–276 (GFAL…LSIV), and 320–340 (LSLD…ALAL). The disordered stretch occupies residues 354–375 (STRKARTPQPLESGSSVAPSVT). Over residues 363 to 375 (PLESGSSVAPSVT) the composition is skewed to polar residues. Helical transmembrane passes span 395–415 (TTTS…GFIY), 424–444 (ILMM…LLLS), 463–483 (PFIV…GMDL), 516–536 (VPLI…RQFF), 548–568 (LADF…SYLI), 588–608 (LLVR…AITG), 611–631 (MTGF…VFQS), 639–659 (IMYG…ILIY), and 695–715 (FLHL…VHYF). Residues 731 to 741 (GSAQQKPTETT) are compositionally biased toward polar residues. The disordered stretch occupies residues 731-772 (GSAQQKPTETTALEPAPSKRRGSAGSLRKSQGPSAEAAPGAT). The next 12 membrane-spanning stretches (helical) occupy residues 819 to 839 (IAAF…FVGF), 857 to 877 (LISF…IEYL), 910 to 930 (LMSL…HAVI), 973 to 993 (LNFG…VSTI), 994 to 1014 (TYRQ…LLLL), 1022 to 1042 (IWGV…IVLV), 1071 to 1091 (GALH…LVIL), 1152 to 1172 (VLCG…TNIA), 1174 to 1194 (LLAL…SDFY), 1198 to 1218 (IHTI…NILI), 1239 to 1259 (WLVH…QIML), and 1275 to 1295 (ITHQ…IFQL). 2 disordered regions span residues 1426-1521 (NITE…AKDS) and 1592-1658 (ESDE…PQQQ). Residues 1430–1448 (SEMKMQRRKTLYDKSKDAP) are compositionally biased toward basic and acidic residues. Over residues 1466–1477 (ATASSSASPAPT) the composition is skewed to low complexity. The segment covering 1497 to 1511 (QTSKETSDSKSKMEV) has biased composition (basic and acidic residues). Low complexity-rich tracts occupy residues 1621–1634 (PTST…TTTP) and 1644–1658 (LQPL…PQQQ). Helical transmembrane passes span 1718–1738 (ISSW…VVFI), 1741–1761 (VVNA…WGTL), 1770–1790 (FWVT…IFQF), and 1817–1837 (AHYA…RYLL). The tract at residues 1854-1876 (FTKPTASIDERDDSDNLSQPDSR) is disordered. 7 helical membrane passes run 1937 to 1957 (ALMF…FTAF), 1979 to 1999 (IPFL…RALY), 2008 to 2028 (IIFH…VVPA), 2033 to 2053 (TFNS…YMLL), 2075 to 2095 (FSMV…LYEL), 2151 to 2171 (IMGG…LCLF), and 2431 to 2451 (TFSF…VLLA). A disordered region spans residues 2522–2551 (EYVDDDGDTDSIPSRMSVRRPEQLQPQQPQ).

The protein belongs to the PIEZO (TC 1.A.75) family.

The protein resides in the cell membrane. Component of a mechanosensitive channel required for rapidly adapting mechanically activated (MA) currents. Plays a major role in nociception (response to strong or painful touch). Required for maintaining the mechanosensitivity of tarsal bristle mechanosensors. During their evalulation of potential egg-laying sites, females determine the softest substrate for their eggs first by making a coarse evaluation of substrate hardness using mechanosensitive channels nan and Piezo in the leg tarsal bristles, followed by a much finer assessment using nan, iav and Tmc mechanosensitive channels on the labellum. Acts in the nompC- and nan-expressing neurons of the female leg tarsals, to sense the mild differences in egg-laying substrate stiffness. This is Piezo-type mechanosensitive ion channel component from Drosophila melanogaster (Fruit fly).